The following is a 152-amino-acid chain: Small ribosomal subunit protein uS11B (152 aa).

The interval Glu-131–Leu-152 is disordered. The segment covering Arg-143–Leu-152 has biased composition (basic residues).

The protein belongs to the universal ribosomal protein uS11 family.

The sequence is that of Small ribosomal subunit protein uS11B from Anopheles gambiae (African malaria mosquito).